Consider the following 1631-residue polypeptide: ABC transporter A family member 6 (1631 aa).

Helical transmembrane passes span Ile-25–Leu-45, Ser-242–Ile-262, Ser-285–Phe-305, Gly-317–Phe-337, Phe-346–Ser-366, Val-372–Ile-392, and Ile-416–Val-436. The 234-residue stretch at Ile-491–Asn-724 folds into the ABC transporter 1 domain. Gly-527–Ser-534 serves as a coordination point for ATP. 7 helical membrane passes run Ser-866–Lys-886, Ala-1047–Ala-1067, Trp-1099–Ile-1119, Phe-1127–Leu-1147, Ala-1158–Leu-1178, Ile-1198–Ile-1218, and Leu-1242–Leu-1262. In terms of domain architecture, ABC transporter 2 spans Ile-1309–Lys-1544. Residue Gly-1347–Ser-1354 participates in ATP binding.

This sequence belongs to the ABC transporter superfamily. ABCA family.

The protein resides in the membrane. This is ABC transporter A family member 6 (abcA6) from Dictyostelium discoideum (Social amoeba).